The primary structure comprises 610 residues: Glucoamylase ARB_02327-1 (610 aa).

Residues 1–18 (MRVTSLLWSSLVIPAAVG) form the signal peptide. A propeptide spanning residues 19–24 (FQVRFK) is cleaved from the precursor. N-linked (GlcNAc...) asparagine glycosylation is present at N49. W143 is a substrate binding site. N-linked (GlcNAc...) asparagine glycosylation is present at N194. D199 (proton acceptor) is an active-site residue. The active-site Proton donor is E202. 3 cysteine pairs are disulfide-bonded: C233-C236, C245-C472, and C285-C293. The region spanning 504 to 610 (TALPTKNNVR…SGAIKRDTWR (107 aa)) is the CBM20 domain.

This sequence belongs to the glycosyl hydrolase 15 family.

It localises to the secreted. The catalysed reaction is Hydrolysis of terminal (1-&gt;4)-linked alpha-D-glucose residues successively from non-reducing ends of the chains with release of beta-D-glucose.. In Arthroderma benhamiae (strain ATCC MYA-4681 / CBS 112371) (Trichophyton mentagrophytes), this protein is Glucoamylase ARB_02327-1.